A 674-amino-acid chain; its full sequence is MATDTPPQLAGPPTPAMETLDRDVVMSPRKRRRLSASAEPELTEPESDGTSGGRGAAAEAPETAALEPKSLFNSTSTESSITSSSTTTTTTSSSSSIAPFLAKHIRDQHASRNRFAPADSSLPRRKADSKYCYRHRPDLKCRRQADEPTVDQMQRDLSTLSQNDQQSIAHFWSLFSAAPSKHRNLMLQGIVAQCCFPQLSFLSASVRDLIRIDFVTALPPEISFKILSYLDTASLCNAAQVSRNWRHLADDDVVWHRMCEQHIDRKCEKCGWGLPMLDRKRLKDTKRQVQLRAAGKEAVTGRQQQQHRPWKAVYMDRFKVGTNWKYGRCTTTIFRGHTNGVMCLQFDDNILATGSYDATIKIWDIETGKEIRTLRGHESTIRCLQFDDTKLISGSLDRTIKVWSWRSGECISTYTGHQGGVLCLHFDSTTLASGSKDNTIKIWNFQDKSTQILRGHTDWVNAVKLDTASRTVFSASDDLTVRIWDLDTGKCIHTYAGHVGQVQQVLPLPREFEFKHTSHCDDDRSDRLSGSESPDHRASHDSNHAPDLPTTSAPPTQPMSPLFEALFNEDRPAPPRYMLTAALDSTLRLWEVHTGRCLRTFFGHIEGVWGLAADTLRLVSGAQDHMTKVWDPRTGTCERTFTGHRGPVTCVSLSDSRMATGSEDCEVRMYSFKA.

The disordered stretch occupies residues 1-96 (MATDTPPQLA…TTTTTSSSSS (96 aa)). Low complexity predominate over residues 56-96 (AAAEAPETAALEPKSLFNSTSTESSITSSSTTTTTTSSSSS). The F-box domain maps to 212 to 258 (IDFVTALPPEISFKILSYLDTASLCNAAQVSRNWRHLADDDVVWHRM). 4 WD repeats span residues 336 to 375 (GHTN…RTLR), 377 to 415 (HEST…STYT), 416 to 453 (GHQG…TQIL), and 455 to 496 (GHTD…HTYA). Residues 518–544 (SHCDDDRSDRLSGSESPDHRASHDSNH) are compositionally biased toward basic and acidic residues. A disordered region spans residues 518 to 561 (SHCDDDRSDRLSGSESPDHRASHDSNHAPDLPTTSAPPTQPMSP). WD repeat units lie at residues 557 to 600 (QPMS…CLRT), 603 to 640 (GHIE…CERT), and 643 to 674 (GHRG…SFKA).

Belongs to the WD repeat MET30/SCONB/SCON-2 family. In terms of assembly, component of the SCF(sconB) E3 ubiquitin ligase complex.

The protein operates within protein modification; protein ubiquitination. Component of the SCF(sconB) E3 ubiquitin ligase complex involved in the regulation of sulfur metabolite repression, probably by mediating the inactivation or degradation of the metR transcription factor. This Arthroderma otae (strain ATCC MYA-4605 / CBS 113480) (Microsporum canis) protein is Probable E3 ubiquitin ligase complex SCF subunit sconB (sconB).